A 158-amino-acid chain; its full sequence is Regulator of G-protein signaling 13 (158 aa).

The RGS domain maps to 34-150; the sequence is SLESLMATKY…LKSEMYQQLL (117 aa).

Inhibits signal transduction by increasing the GTPase activity of G protein alpha subunits thereby driving them into their inactive GDP-bound form. Binds to both G(i)-alpha and G(q)-alpha. This is Regulator of G-protein signaling 13 (Rgs13) from Mus musculus (Mouse).